Here is a 380-residue protein sequence, read N- to C-terminus: Protein trichome birefringence-like 38 (380 aa).

Residues 7 to 29 (SLLLLFLPLLTVTILSGVEQAFA) form a helical; Signal-anchor for type II membrane protein membrane-spanning segment. The GDS motif motif lies at 134-136 (GDS). Positions 357 to 371 (DCSHWCLPGLPDTWN) match the DCXHWCLPGXXDXWN motif motif.

It belongs to the PC-esterase family. TBL subfamily.

It localises to the membrane. Functionally, may act as a bridging protein that binds pectin and other cell wall polysaccharides. Probably involved in maintaining esterification of pectins. May be involved in the specific O-acetylation of cell wall polymers. This chain is Protein trichome birefringence-like 38 (TBL38), found in Arabidopsis thaliana (Mouse-ear cress).